A 94-amino-acid chain; its full sequence is Co-chaperonin GroES (94 aa).

The protein belongs to the GroES chaperonin family. As to quaternary structure, heptamer of 7 subunits arranged in a ring. Interacts with the chaperonin GroEL.

It localises to the cytoplasm. In terms of biological role, together with the chaperonin GroEL, plays an essential role in assisting protein folding. The GroEL-GroES system forms a nano-cage that allows encapsulation of the non-native substrate proteins and provides a physical environment optimized to promote and accelerate protein folding. GroES binds to the apical surface of the GroEL ring, thereby capping the opening of the GroEL channel. In Staphylococcus carnosus (strain TM300), this protein is Co-chaperonin GroES.